The chain runs to 149 residues: Large ribosomal subunit protein uL13 (149 aa).

It belongs to the universal ribosomal protein uL13 family. In terms of assembly, part of the 50S ribosomal subunit.

This protein is one of the early assembly proteins of the 50S ribosomal subunit, although it is not seen to bind rRNA by itself. It is important during the early stages of 50S assembly. In Bifidobacterium adolescentis (strain ATCC 15703 / DSM 20083 / NCTC 11814 / E194a), this protein is Large ribosomal subunit protein uL13.